A 274-amino-acid chain; its full sequence is Tryptophan synthase alpha chain (274 aa).

Active-site proton acceptor residues include glutamate 49 and aspartate 60.

This sequence belongs to the TrpA family. As to quaternary structure, tetramer of two alpha and two beta chains.

It catalyses the reaction (1S,2R)-1-C-(indol-3-yl)glycerol 3-phosphate + L-serine = D-glyceraldehyde 3-phosphate + L-tryptophan + H2O. Its pathway is amino-acid biosynthesis; L-tryptophan biosynthesis; L-tryptophan from chorismate: step 5/5. The alpha subunit is responsible for the aldol cleavage of indoleglycerol phosphate to indole and glyceraldehyde 3-phosphate. This is Tryptophan synthase alpha chain from Gluconacetobacter diazotrophicus (strain ATCC 49037 / DSM 5601 / CCUG 37298 / CIP 103539 / LMG 7603 / PAl5).